Reading from the N-terminus, the 246-residue chain is tRNA pseudouridine synthase A (246 aa).

Asp-52 serves as the catalytic Nucleophile. Tyr-112 is a binding site for substrate.

This sequence belongs to the tRNA pseudouridine synthase TruA family. Homodimer.

It catalyses the reaction uridine(38/39/40) in tRNA = pseudouridine(38/39/40) in tRNA. Its function is as follows. Formation of pseudouridine at positions 38, 39 and 40 in the anticodon stem and loop of transfer RNAs. In Pelagibacter ubique (strain HTCC1062), this protein is tRNA pseudouridine synthase A.